A 285-amino-acid chain; its full sequence is Gap junction Cx32.2 protein (285 aa).

Residues 2-19 (GDLGFLSKLLDQVQSHST) are Cytoplasmic-facing. Residues 20-40 (VIGKIWMTVLFLFRIMVLGAG) form a helical membrane-spanning segment. Over 41–76 (AESVWGDEQSDFTCNTQQPGCENVCYDWTFPISHIR) the chain is Extracellular. A helical membrane pass occupies residues 77–99 (FWVLQIIFVSTPTLIYLGHAMHI). Residues 100–148 (IQQETKLRARLSSPGGSRLCKQPKYTNEQGKVKIKGNLLGSYLTQLVFK) are Cytoplasmic-facing. The chain crosses the membrane as a helical span at residues 149–171 (IIIEAAFIVGQYYLYGFIMVPMF). Residues 172 to 194 (PCSKKPCPFTVECYMSRPTEKTI) lie on the Extracellular side of the membrane. The helical transmembrane segment at 195 to 217 (FIIFMLVVACVSLLLNVIEVFYL) threads the bilayer. Topologically, residues 218–285 (ICTRVRCGSR…AKEEKRLLSH (68 aa)) are cytoplasmic. The interval 264–285 (ETSQSIGGSLDGAKEEKRLLSH) is disordered. A compositionally biased stretch (basic and acidic residues) spans 275 to 285 (GAKEEKRLLSH).

This sequence belongs to the connexin family. Beta-type (group I) subfamily. In terms of assembly, a connexon is composed of a hexamer of connexins.

The protein localises to the cell membrane. The protein resides in the cell junction. Its subcellular location is the gap junction. Functionally, one gap junction consists of a cluster of closely packed pairs of transmembrane channels, the connexons, through which materials of low MW diffuse from one cell to a neighboring cell. May be involved in ovarian follicular maturation. This chain is Gap junction Cx32.2 protein, found in Micropogonias undulatus (Atlantic croaker).